The sequence spans 578 residues: Synaptic defective enhancer 1 (578 aa).

4 disordered regions span residues 1-62 (MGEP…RKET), 173-216 (SEQA…SMDQ), 426-457 (PPLPPPQAPFSGDCWRAQPAAPVPASVPVSSA), and 474-578 (LGLH…FSNF). Positions 444-455 (PAAPVPASVPVS) are enriched in low complexity. 2 stretches are compositionally biased toward pro residues: residues 481–491 (PPPPPPPPPPT) and 500–542 (IPPP…PNPN). The segment covering 565-578 (NQFPPQQQQSFSNF) has biased composition (low complexity).

As to quaternary structure, may interact (via C-terminus) with ssup-72; the interaction may prevent ssup-72 binding to RNA polymerase II subunit ama-1. In terms of tissue distribution, expressed in germline, oocytes, epidermis, pharyngeal bulb and neurons.

The protein localises to the nucleus. It localises to the nucleus speckle. Acts as a negative regulator of nuclear pre-mRNA 3'-end processing (mRNA polyadenylation). Plays a role in tissue-specific expression of protein isoforms by regulating differential processing of pre-mRNA 3'-end (alternative polyadenylation). In neurons, regulates alternative polyadenylation of specific mRNAs including unc-44 and dlk-1 by interacting with phosphatase ssup-72 and thus preventing ssup-72 dephosphorylation of RNA polymerase II subunit ama-1. Specifically, alters the usage of internal polyadenylation sites (PAS) to promote the production of neuron-specific unc-44 isoform and dlk-1 isoform c, both required for normal synapse and axon development. Conversely, in the epidermis, by inhibiting ssup-72 function, promotes the usage of an internal PAS preventing the production of one of unc-44 isoforms. In neurons, also negatively regulates protein levels of pre-RNA processing protein psf-2. The polypeptide is Synaptic defective enhancer 1 (Caenorhabditis elegans).